We begin with the raw amino-acid sequence, 414 residues long: Carboxynorspermidine synthase (414 aa).

The protein belongs to the saccharopine dehydrogenase family. Carboxynorspermidine synthase subfamily. As to quaternary structure, homodimer.

It carries out the reaction carboxynorspermidine + NADP(+) + H2O = L-aspartate 4-semialdehyde + propane-1,3-diamine + NADPH + H(+). The catalysed reaction is carboxyspermidine + NADP(+) + H2O = L-aspartate 4-semialdehyde + putrescine + NADPH + H(+). Activated by dithiothreitol and inhibited by SH-reactive compounds. In terms of biological role, involved in norspermidine biosynthesis. Catalyzes the synthesis of carboxynorspermidine from L-aspartate 4-semialdehyde and 1,3-diaminopropane. Is also slightly active with putrescine as a substrate. The sequence is that of Carboxynorspermidine synthase from Vibrio alginolyticus (strain ATCC 17749 / DSM 2171 / NBRC 15630 / NCIMB 1903 / NCTC 12160 / XII-53).